A 144-amino-acid chain; its full sequence is Large ribosomal subunit protein uL11 (144 aa).

This sequence belongs to the universal ribosomal protein uL11 family. As to quaternary structure, part of the ribosomal stalk of the 50S ribosomal subunit. Interacts with L10 and the large rRNA to form the base of the stalk. L10 forms an elongated spine to which L12 dimers bind in a sequential fashion forming a multimeric L10(L12)X complex. In terms of processing, one or more lysine residues are methylated.

Forms part of the ribosomal stalk which helps the ribosome interact with GTP-bound translation factors. This Rhodococcus opacus (strain B4) protein is Large ribosomal subunit protein uL11.